The sequence spans 519 residues: Nif-specific regulatory protein (519 aa).

The Sigma-54 factor interaction domain occupies 177 to 405 (IVGESPALKR…LDNCVQRTAT (229 aa)). ATP is bound by residues 205–212 (GESGTGKE) and 268–277 (ANGGTLLLDE). Residues 406-476 (LASSNTITSS…ATIEAAGLTE (71 aa)) form an inter-domain linker region. Residues Cys419 and Cys424 each coordinate a divalent metal cation. The tract at residues 477-519 (RDRLIKAMERAGWVQAKAARILGKTPRQVGYALRRHRIDVKKE) is C-terminal DNA-binding domain. The segment at residues 491 to 510 (QAKAARILGKTPRQVGYALR) is a DNA-binding region (H-T-H motif).

Interacts with sigma-54.

Its function is as follows. Required for activation of most nif operons, which are directly involved in nitrogen fixation. This chain is Nif-specific regulatory protein (nifA), found in Rhizobium leguminosarum.